The following is a 438-amino-acid chain: Exodeoxyribonuclease 7 large subunit (438 aa).

The disordered stretch occupies residues 406–438 (ATSTGPTDDIPSSAARLPASPAPDARPASGPES).

Belongs to the XseA family. As to quaternary structure, heterooligomer composed of large and small subunits.

The protein localises to the cytoplasm. The catalysed reaction is Exonucleolytic cleavage in either 5'- to 3'- or 3'- to 5'-direction to yield nucleoside 5'-phosphates.. Its function is as follows. Bidirectionally degrades single-stranded DNA into large acid-insoluble oligonucleotides, which are then degraded further into small acid-soluble oligonucleotides. The sequence is that of Exodeoxyribonuclease 7 large subunit from Clavibacter sepedonicus (Clavibacter michiganensis subsp. sepedonicus).